An 81-amino-acid chain; its full sequence is Probable antimicrobial peptide Con13 (81 aa).

The N-terminal stretch at 1-22 is a signal peptide; the sequence is MNRKLLLVFLVVAMLVMQPAEA. The propeptide occupies 66–81; it reads EAGQIPFDEFMDVLYS.

The protein belongs to the non-disulfide-bridged peptide (NDBP) superfamily. Long chain multifunctional peptide (group 2) family. In terms of tissue distribution, expressed by the venom gland.

Its subcellular location is the secreted. The protein localises to the target cell membrane. At high concentrations, acts as a pore former in cellular membranes and causes the leakage of the cells. At submicromolar concentrations, degranulates granulocytes and has a weak hemolytic activity against human erythrocytes. Also strongly inhibits the production of superoxide anions. Has a strong antibacterial activity against Gram-negative bacteria but is less active against Gram-positive bacteria. Also has antifungal activity. The polypeptide is Probable antimicrobial peptide Con13 (Opisthacanthus cayaporum (South American scorpion)).